The chain runs to 502 residues: Probable mitochondrial-processing peptidase subunit alpha (502 aa).

Belongs to the peptidase M16 family. Heterodimer of mas2 (alpha) and mas1 (beta) subunits, forming the mitochondrial processing protease (MPP) in which mas2 is involved in substrate recognition and binding and mas1 is the catalytic subunit.

It is found in the mitochondrion matrix. In terms of biological role, substrate recognition and binding subunit of the essential mitochondrial processing protease (MPP), which cleaves the mitochondrial sequence off newly imported precursors proteins. The protein is Probable mitochondrial-processing peptidase subunit alpha (mas2) of Schizosaccharomyces pombe (strain 972 / ATCC 24843) (Fission yeast).